The chain runs to 221 residues: Urease accessory protein UreG (221 aa).

19–26 provides a ligand contact to GTP; it reads GPVGSGKT.

Belongs to the SIMIBI class G3E GTPase family. UreG subfamily. In terms of assembly, homodimer. UreD, UreF and UreG form a complex that acts as a GTP-hydrolysis-dependent molecular chaperone, activating the urease apoprotein by helping to assemble the nickel containing metallocenter of UreC. The UreE protein probably delivers the nickel.

The protein resides in the cytoplasm. Its function is as follows. Facilitates the functional incorporation of the urease nickel metallocenter. This process requires GTP hydrolysis, probably effectuated by UreG. Functionally, expression of the urease operon increases the likelihood of bacterial survival by contributing to acid resistance in vitro and in vivo in BALB/c mice. Y.enterocolitica enters the body via an oral path and must survive the acidic stomach before being able to colonize the intestinal mucosa. The protein is Urease accessory protein UreG of Yersinia enterocolitica.